Reading from the N-terminus, the 382-residue chain is MANRMILNETAWFGRGAVGALTDEVKRRGYQKALIVTDKTLVQCGVVAKVTDKMDAAGLAWAIYDGVVPNPTITVVKEGLGVFQNSGADYLIAIGGGSPQDTCKAIGIISNNPEFADVRSLEGLSPTNKPSVPILAIPTTAGTAAEVTINYVITDEEKRRKFVCVDPHDIPQVAFIDADMMDGMPPALKAATGVDALTHAIEGYITRGAWALTDALHIKAIEIIAGALRGSVAGDKDAGEEMALGQYVAGMGFSNVGLGLVHGMAHPLGAFYNTPHGVANAILLPHVMRYNADFTGEKYRDIARVMGVKVEGMSLEEARNAAVEAVFALNRDVGIPPHLRDVGVRKEDIPALAQAALDDVCTGGNPREATLEDIVELYHTAW.

Residues Asp38, Asn70, Gly97–Ser98, Thr139–Thr143, Asn150, Lys161, and Met180–Met184 each bind NAD(+). The Fe cation site is built by Asp195, His199, His262, and His276.

It belongs to the iron-containing alcohol dehydrogenase family. In terms of assembly, homodimer. The cofactor is Fe cation.

It catalyses the reaction (R)-propane-1,2-diol + NAD(+) = (R)-lactaldehyde + NADH + H(+). The catalysed reaction is (S)-propane-1,2-diol + NAD(+) = (S)-lactaldehyde + NADH + H(+). It participates in carbohydrate degradation; L-fucose degradation. In Escherichia coli O157:H7, this protein is Lactaldehyde reductase (fucO).